Here is a 613-residue protein sequence, read N- to C-terminus: Dihydroxy-acid dehydratase (613 aa).

Asp-81 provides a ligand contact to Mg(2+). Cys-122 is a [2Fe-2S] cluster binding site. Asp-123 and Lys-124 together coordinate Mg(2+). Lys-124 carries the N6-carboxylysine modification. Position 195 (Cys-195) interacts with [2Fe-2S] cluster. Glu-491 provides a ligand contact to Mg(2+). Ser-517 (proton acceptor) is an active-site residue.

Belongs to the IlvD/Edd family. Homodimer. Requires [2Fe-2S] cluster as cofactor. The cofactor is Mg(2+).

The catalysed reaction is (2R)-2,3-dihydroxy-3-methylbutanoate = 3-methyl-2-oxobutanoate + H2O. It catalyses the reaction (2R,3R)-2,3-dihydroxy-3-methylpentanoate = (S)-3-methyl-2-oxopentanoate + H2O. Its pathway is amino-acid biosynthesis; L-isoleucine biosynthesis; L-isoleucine from 2-oxobutanoate: step 3/4. It participates in amino-acid biosynthesis; L-valine biosynthesis; L-valine from pyruvate: step 3/4. Functions in the biosynthesis of branched-chain amino acids. Catalyzes the dehydration of (2R,3R)-2,3-dihydroxy-3-methylpentanoate (2,3-dihydroxy-3-methylvalerate) into 2-oxo-3-methylpentanoate (2-oxo-3-methylvalerate) and of (2R)-2,3-dihydroxy-3-methylbutanoate (2,3-dihydroxyisovalerate) into 2-oxo-3-methylbutanoate (2-oxoisovalerate), the penultimate precursor to L-isoleucine and L-valine, respectively. This Buchnera aphidicola subsp. Schlechtendalia chinensis protein is Dihydroxy-acid dehydratase.